The sequence spans 77 residues: Cysteine-rich protein 1 (77 aa).

The LIM zinc-binding domain maps to 2-63 (PKCPKCDKEV…HPCYSAMFGP (62 aa)). Lys9 and Lys22 each carry N6-acetyllysine. An Omega-N-methylarginine modification is found at Arg68.

Seems to have a role in zinc absorption and may function as an intracellular zinc transport protein. In Mus musculus (Mouse), this protein is Cysteine-rich protein 1 (Crip1).